A 2718-amino-acid chain; its full sequence is E3 SUMO-protein ligase RanBP2 (2718 aa).

Positions 1–100 are sufficient for interaction with Hsp83; it reads MFTTRKEVDA…DPRQSEVVID (100 aa). The sufficient for interaction with piwi stretch occupies residues 1–200; that stretch reads MFTTRKEVDA…EKMKIDQAFN (200 aa). TPR repeat units follow at residues 26 to 58 and 59 to 94; these read DIKGLAVARLYMKVQEYPKAIEYLNGYLRVRDD and AVGHNMIATCYSRLNPPDVTEALQHYQRSIQIDPRQ. Disordered stretches follow at residues 796-816 and 937-959; these read QQDRNSRGIDNSFGSPDVHNN and EHQQQQQHQQQQSHNQGAIHPVV. Residues 803 to 816 are compositionally biased toward polar residues; sequence GIDNSFGSPDVHNN. Repeat unit 1 spans residues 808–809; the sequence is FG. The segment at 808-2581 is 27 X 2 AA repeats of F-G; that stretch reads FGSPDVHNNS…GEENETKLFG (1774 aa). Positions 938–948 are enriched in low complexity; it reads HQQQQQHQQQQ. 3 tandem repeats follow at residues 1028 to 1029, 1035 to 1036, and 1104 to 1105. A disordered region spans residues 1181–1208; sequence QPVEKEPPANVVITSSDPLPKPTTASVQ. Over residues 1192 to 1208 the composition is skewed to polar residues; that stretch reads VITSSDPLPKPTTASVQ. Residues 1252–1253 form repeat 5; the sequence is FG. Disordered stretches follow at residues 1263–1314 and 1483–1502; these read FKTQ…KPII and NKPQEQTKTQPNPDPPATAA. Positions 1284-1299 are enriched in polar residues; it reads NQSGATDPNKTLPQDT. Residues 1309–1445 enclose the RanBD1 1 domain; it reads DFKPIIPLPD…FTKASEAAKS (137 aa). The segment covering 1483 to 1493 has biased composition (polar residues); the sequence is NKPQEQTKTQP. Tandem repeats lie at residues 1506–1507, 1539–1540, 1547–1548, and 1552–1553. Residues 1605 to 1742 form the RanBD1 2 domain; that stretch reads QFVPVIALPD…VQKAQQSIGN (138 aa). The disordered stretch occupies residues 1738–1761; sequence QSIGNEPKKEEVPSAAGEKEKPIK. Basic and acidic residues predominate over residues 1743-1760; the sequence is EPKKEEVPSAAGEKEKPI. Repeat unit 10 spans residues 1763–1764; it reads FG. Residues 1770 to 1799 form a RanBP2-type 1 zinc finger; that stretch reads KAGSWNCQACYTNNGQDQLYCLACQEPKDA. 4 consecutive repeat copies span residues 1826–1827, 1842–1843, 1874–1875, and 1883–1884. The RanBP2-type 2 zinc-finger motif lies at 1890 to 1919; the sequence is AVGSWSCSACYVNNPGESLYCSACDAPKND. 2 tandem repeats follow at residues 1942–1943 and 1944–1945. Disordered regions lie at residues 1981 to 2021, 2154 to 2204, and 2239 to 2273; these read FTFS…TYFS, EDSP…THEV, and SLSRNNSSASEASKTPSSAFIFGSTDKSEPGKDAG. Residues 2002–2016 are compositionally biased toward acidic residues; sequence EDEDNDSQEVEEEEN. The 133-residue stretch at 2019–2151 folds into the RanBD1 3 domain; it reads YFSPVIPLPD…IKNALNETAK (133 aa). Residues 2161 to 2175 show a composition bias toward polar residues; sequence SVSQSTEANKPSQKN. Over residues 2239 to 2257 the composition is skewed to low complexity; it reads SLSRNNSSASEASKTPSSA. Repeat copies occupy residues 2260-2261, 2313-2314, 2332-2333, 2352-2353, 2360-2361, 2366-2367, 2393-2394, 2399-2400, 2415-2416, 2421-2422, and 2580-2581. The tract at residues 2320-2346 is disordered; that stretch reads AEQQKKDSSESVFGGNKADSQSPATQE. Positions 2556-2699 constitute a RanBD1 4 domain; the sequence is HYDAIVELPD…VNSCIKRAKA (144 aa).

It belongs to the RanBP2 E3 ligase family. In terms of assembly, part of the nuclear pore complex. Forms a complex with Nxt1, sbr/Nxf1 and RanGAP. Interacts (via TPR repeats) with Hsp83; the interaction is required for the nuclear import of the sesquiterpenoid juvenile hormone receptor Met. Interacts (via N-terminus) with piwi. Expressed in both oocytes and nurse cells (at protein level).

The protein resides in the nucleus. The protein localises to the nuclear pore complex. Its function is as follows. E3 SUMO-protein ligase. Component of the nuclear pore complex (NPC), a complex required for trafficking across the nuclear envelope. Required for nuclear import of nuclear localization signal (NLS)-containing proteins in an importin alpha/importin beta-dependent manner, but also for the nuclear import of specific proteins such as phosphorylated Mad or the sesquiterpenoid juvenile hormone receptor Met as part of the juvenile hormone signal transduction pathway. Plays a role in nuclear mRNA export by recruiting the mRNA transport complex composed of Nxt1 and sbr/Nxf1 to the NPC. Essential during germline development for transposon silencing and piRNA biogenesis probably by regulating piwi localization to the nucleus. During oogenesis, required to form granules that modulate the biogenesis of annulate lamellae containing nuclear pore complex components. This chain is E3 SUMO-protein ligase RanBP2, found in Drosophila melanogaster (Fruit fly).